A 554-amino-acid chain; its full sequence is 2-succinyl-5-enolpyruvyl-6-hydroxy-3-cyclohexene-1-carboxylate synthase (554 aa).

It belongs to the TPP enzyme family. MenD subfamily. As to quaternary structure, homodimer. Requires Mg(2+) as cofactor. Mn(2+) is required as a cofactor. It depends on thiamine diphosphate as a cofactor.

The enzyme catalyses isochorismate + 2-oxoglutarate + H(+) = 5-enolpyruvoyl-6-hydroxy-2-succinyl-cyclohex-3-ene-1-carboxylate + CO2. It participates in quinol/quinone metabolism; 1,4-dihydroxy-2-naphthoate biosynthesis; 1,4-dihydroxy-2-naphthoate from chorismate: step 2/7. It functions in the pathway quinol/quinone metabolism; menaquinone biosynthesis. Catalyzes the thiamine diphosphate-dependent decarboxylation of 2-oxoglutarate and the subsequent addition of the resulting succinic semialdehyde-thiamine pyrophosphate anion to isochorismate to yield 2-succinyl-5-enolpyruvyl-6-hydroxy-3-cyclohexene-1-carboxylate (SEPHCHC). The polypeptide is 2-succinyl-5-enolpyruvyl-6-hydroxy-3-cyclohexene-1-carboxylate synthase (Mycobacterium tuberculosis (strain ATCC 25177 / H37Ra)).